The primary structure comprises 82 residues: Small ribosomal subunit protein bS18 (82 aa).

The disordered stretch occupies residues 1 to 20 (MVDINQIPTRRPFHRRRKTC).

The protein belongs to the bacterial ribosomal protein bS18 family. In terms of assembly, part of the 30S ribosomal subunit. Forms a tight heterodimer with protein bS6.

Its function is as follows. Binds as a heterodimer with protein bS6 to the central domain of the 16S rRNA, where it helps stabilize the platform of the 30S subunit. The polypeptide is Small ribosomal subunit protein bS18 (Brucella abortus (strain 2308)).